Reading from the N-terminus, the 408-residue chain is AA9 family lytic polysaccharide monooxygenase A (408 aa).

Positions 1 to 20 (MKTTTYSLLALAAASKLASA) are cleaved as a signal peptide. Cu(2+) is bound by residues histidine 21 and histidine 103. Cysteines 63 and 186 form a disulfide. An N-linked (GlcNAc...) asparagine glycan is attached at asparagine 151. Histidine 172 provides a ligand contact to O2. Tyrosine 183 contacts Cu(2+). N-linked (GlcNAc...) asparagine glycosylation is found at asparagine 331 and asparagine 381. The 37-residue stretch at 369–405 (GVAKQYERCGGINHTGPTTCESGSVCKKWNPYYYQCV) folds into the CBM1 domain.

This sequence belongs to the polysaccharide monooxygenase AA9 family. Cu(2+) is required as a cofactor.

It localises to the secreted. It carries out the reaction [(1-&gt;4)-beta-D-glucosyl]n+m + reduced acceptor + O2 = 4-dehydro-beta-D-glucosyl-[(1-&gt;4)-beta-D-glucosyl]n-1 + [(1-&gt;4)-beta-D-glucosyl]m + acceptor + H2O.. Functionally, lytic polysaccharide monooxygenase (LPMO) that depolymerizes crystalline and amorphous polysaccharides via the oxidation of scissile alpha- or beta-(1-4)-glycosidic bonds, yielding C4 oxidation products. Catalysis by LPMOs requires the reduction of the active-site copper from Cu(II) to Cu(I) by a reducing agent and H(2)O(2) or O(2) as a cosubstrate. The sequence is that of AA9 family lytic polysaccharide monooxygenase A (eglD) from Aspergillus kawachii (strain NBRC 4308) (White koji mold).